Reading from the N-terminus, the 241-residue chain is MMIMVKYGIKIEDDRVEIVRYSTVYTDEGVEELEEIYLQIKADDYESILGIYEPYPKKDVRFVGNLDDLKVVKGQEMRTAVPIPLSLCRAKYLKRIDEDDERITYLDINGVPIQRGIIVGIVVGVQHKRTSTGKDYTIFRIFDGYGWGRLRLFGIKANPEIFTGMFIRGFVRFGAVEFRTEEGELRKAISLTLNDIPVIVQPKEYIVHKKFIDEVVLPRVAPELIEEDKEEEETDEETINS.

This is an uncharacterized protein from Methanocaldococcus jannaschii (strain ATCC 43067 / DSM 2661 / JAL-1 / JCM 10045 / NBRC 100440) (Methanococcus jannaschii).